A 238-amino-acid chain; its full sequence is 2-C-methyl-D-erythritol 4-phosphate cytidylyltransferase (238 aa).

This sequence belongs to the IspD/TarI cytidylyltransferase family. IspD subfamily.

The enzyme catalyses 2-C-methyl-D-erythritol 4-phosphate + CTP + H(+) = 4-CDP-2-C-methyl-D-erythritol + diphosphate. It functions in the pathway isoprenoid biosynthesis; isopentenyl diphosphate biosynthesis via DXP pathway; isopentenyl diphosphate from 1-deoxy-D-xylulose 5-phosphate: step 2/6. In terms of biological role, catalyzes the formation of 4-diphosphocytidyl-2-C-methyl-D-erythritol from CTP and 2-C-methyl-D-erythritol 4-phosphate (MEP). The polypeptide is 2-C-methyl-D-erythritol 4-phosphate cytidylyltransferase (Acinetobacter baumannii (strain AYE)).